An 891-amino-acid chain; its full sequence is Nitrate reductase [NAD(P)H] (891 aa).

The tract at residues 1-78 (MAASVEYNRQ…VKDPRDEATS (78 aa)) is disordered. Residues 63–76 (LDVEPSVKDPRDEA) are compositionally biased toward basic and acidic residues. Cys-168 is a Mo-molybdopterin binding site. Residues 515–590 (SAQFTMSEVR…LEMYRVGELI (76 aa)) form the Cytochrome b5 heme-binding domain. 2 residues coordinate heme: His-550 and His-573. Residues 630 to 742 (REKVRCRLVD…KGPVGHIEYA (113 aa)) enclose the FAD-binding FR-type domain. FAD contacts are provided by residues 682 to 685 (RAYT), 699 to 703 (LIKIY), Phe-704, Phe-711, 716 to 718 (LMS), and Thr-769.

It belongs to the nitrate reductase family. As to quaternary structure, homodimer. FAD serves as cofactor. It depends on heme as a cofactor. The cofactor is Mo-molybdopterin.

It catalyses the reaction nitrite + NAD(+) + H2O = nitrate + NADH + H(+). It carries out the reaction nitrite + NADP(+) + H2O = nitrate + NADPH + H(+). Nitrate reductase is a key enzyme involved in the first step of nitrate assimilation in plants, fungi and bacteria. This is Nitrate reductase [NAD(P)H] (NAR-7) from Hordeum vulgare (Barley).